Consider the following 440-residue polypeptide: D-serine dehydratase (440 aa).

Lys116 is modified (N6-(pyridoxal phosphate)lysine).

The protein belongs to the serine/threonine dehydratase family. DsdA subfamily. In terms of assembly, monomer. Pyridoxal 5'-phosphate is required as a cofactor.

The catalysed reaction is D-serine = pyruvate + NH4(+). This is D-serine dehydratase from Salmonella agona (strain SL483).